A 435-amino-acid polypeptide reads, in one-letter code: Bystin (435 aa).

Positions 1–102 (MPKFKAARGA…VPQDGSDDEE (102 aa)) are disordered. The residue at position 40 (R40) is an Omega-N-methylarginine. A compositionally biased stretch (basic and acidic residues) spans 71 to 87 (AEHGSGDRPAVPRERTT). The residue at position 98 (S98) is a Phosphoserine. Position 154 is a phosphothreonine (T154). A phosphoserine mark is found at S165 and S412.

Belongs to the bystin family. In terms of assembly, binds trophinin, tastin and cytokeratins.

It localises to the cytoplasm. Its subcellular location is the nucleus. The protein localises to the nucleolus. Required for processing of 20S pre-rRNA precursor and biogenesis of 40S ribosomal subunits. The sequence is that of Bystin (BYSL) from Bos taurus (Bovine).